The sequence spans 140 residues: Phosphoribosyl-AMP cyclohydrolase (140 aa).

Residue aspartate 78 coordinates Mg(2+). Cysteine 79 provides a ligand contact to Zn(2+). Mg(2+) is bound by residues aspartate 80 and aspartate 82. Zn(2+) is bound by residues cysteine 96 and cysteine 103.

The protein belongs to the PRA-CH family. As to quaternary structure, homodimer. Mg(2+) serves as cofactor. Zn(2+) is required as a cofactor.

It localises to the cytoplasm. It catalyses the reaction 1-(5-phospho-beta-D-ribosyl)-5'-AMP + H2O = 1-(5-phospho-beta-D-ribosyl)-5-[(5-phospho-beta-D-ribosylamino)methylideneamino]imidazole-4-carboxamide. The protein operates within amino-acid biosynthesis; L-histidine biosynthesis; L-histidine from 5-phospho-alpha-D-ribose 1-diphosphate: step 3/9. Catalyzes the hydrolysis of the adenine ring of phosphoribosyl-AMP. This chain is Phosphoribosyl-AMP cyclohydrolase, found in Ralstonia pickettii (strain 12J).